The sequence spans 296 residues: tRNA dimethylallyltransferase (296 aa).

2-9 is an ATP binding site; it reads GPTASGKT. Residue 4–9 coordinates substrate; sequence TASGKT. Interaction with substrate tRNA regions lie at residues 27–30, 151–155, and 232–237; these read DSAL, QRLSR, and RCVGYR.

This sequence belongs to the IPP transferase family. As to quaternary structure, monomer. Mg(2+) serves as cofactor.

The enzyme catalyses adenosine(37) in tRNA + dimethylallyl diphosphate = N(6)-dimethylallyladenosine(37) in tRNA + diphosphate. Its function is as follows. Catalyzes the transfer of a dimethylallyl group onto the adenine at position 37 in tRNAs that read codons beginning with uridine, leading to the formation of N6-(dimethylallyl)adenosine (i(6)A). The polypeptide is tRNA dimethylallyltransferase (Shewanella sp. (strain MR-4)).